The following is a 265-amino-acid chain: Phosphonates import ATP-binding protein PhnC (265 aa).

Positions 18–262 (LVVEHLRKEY…HLKQIYGGEE (245 aa)) constitute an ABC transporter domain. ATP is bound at residue 51–58 (GPSGTGKS).

Belongs to the ABC transporter superfamily. Phosphonates importer (TC 3.A.1.9.1) family. As to quaternary structure, the complex is composed of two ATP-binding proteins (PhnC), two transmembrane proteins (PhnE) and a solute-binding protein (PhnD).

The protein localises to the cell inner membrane. The enzyme catalyses phosphonate(out) + ATP + H2O = phosphonate(in) + ADP + phosphate + H(+). Its function is as follows. Part of the ABC transporter complex PhnCDE involved in phosphonates import. Responsible for energy coupling to the transport system. This chain is Phosphonates import ATP-binding protein PhnC, found in Nitratidesulfovibrio vulgaris (strain ATCC 29579 / DSM 644 / CCUG 34227 / NCIMB 8303 / VKM B-1760 / Hildenborough) (Desulfovibrio vulgaris).